Consider the following 391-residue polypeptide: Ferrochelatase (391 aa).

Residues His196 and Glu281 each contribute to the Fe cation site.

It belongs to the ferrochelatase family.

Its subcellular location is the cytoplasm. It carries out the reaction heme b + 2 H(+) = protoporphyrin IX + Fe(2+). Its pathway is porphyrin-containing compound metabolism; protoheme biosynthesis; protoheme from protoporphyrin-IX: step 1/1. Its function is as follows. Catalyzes the ferrous insertion into protoporphyrin IX. This chain is Ferrochelatase, found in Prochlorococcus marinus (strain MIT 9515).